Here is a 100-residue protein sequence, read N- to C-terminus: UPF0473 protein Lm4b_01511 (100 aa).

Belongs to the UPF0473 family.

This chain is UPF0473 protein Lm4b_01511, found in Listeria monocytogenes serotype 4b (strain CLIP80459).